A 461-amino-acid chain; its full sequence is Fumarate hydratase class II (461 aa).

Substrate contacts are provided by residues 99-101 (SGT), 130-133 (HPND), 140-142 (STN), and threonine 188. Histidine 189 (proton donor/acceptor) is an active-site residue. Residue serine 319 is part of the active site. Substrate contacts are provided by residues serine 320 and 325–327 (KVN).

This sequence belongs to the class-II fumarase/aspartase family. Fumarase subfamily. As to quaternary structure, homotetramer.

The protein localises to the cytoplasm. The catalysed reaction is (S)-malate = fumarate + H2O. Its pathway is carbohydrate metabolism; tricarboxylic acid cycle; (S)-malate from fumarate: step 1/1. Its function is as follows. Involved in the TCA cycle. Catalyzes the stereospecific interconversion of fumarate to L-malate. This Prochlorococcus marinus subsp. pastoris (strain CCMP1986 / NIES-2087 / MED4) protein is Fumarate hydratase class II.